A 238-amino-acid polypeptide reads, in one-letter code: Flagellar L-ring protein (238 aa).

The signal sequence occupies residues 1–17; the sequence is MKRRLLAAGCAMLLLSG. Cys-18 is lipidated: N-palmitoyl cysteine. Residue Cys-18 is the site of S-diacylglycerol cysteine attachment. Residues 22-50 form a disordered region; sequence RQQPSPVPPVTQPQAYAEPEDTAANPGSL.

The protein belongs to the FlgH family. The basal body constitutes a major portion of the flagellar organelle and consists of four rings (L,P,S, and M) mounted on a central rod.

It is found in the cell outer membrane. The protein localises to the bacterial flagellum basal body. Assembles around the rod to form the L-ring and probably protects the motor/basal body from shearing forces during rotation. In Nitratidesulfovibrio vulgaris (strain DSM 19637 / Miyazaki F) (Desulfovibrio vulgaris), this protein is Flagellar L-ring protein.